The following is a 73-amino-acid chain: uncharacterized protein (73 aa).

The stretch at 20–49 (NATYNKNLELEKRLAKIRNEIPNKSKLIAT) forms a coiled coil.

This is an uncharacterized protein from Acheta domesticus (House cricket).